A 483-amino-acid polypeptide reads, in one-letter code: WAS/WASL-interacting protein family member 3 (483 aa).

Residues 1–29 (MPVPPPPPPPLPPPPPPLGAPPPPPPSAP) show a composition bias toward pro residues. The tract at residues 1–414 (MPVPPPPPPP…GGQLRNGSLH (414 aa)) is disordered. 3 consecutive short sequence motifs (profilin-binding motif) follow at residues 3 to 8 (VPPPPP), 11 to 16 (LPPPPP), and 20 to 25 (APPPPP). In terms of domain architecture, WH2 spans 45–62 (GRSALLADIQQGTRLRKV). R46 carries the asymmetric dimethylarginine modification. Positions 58-61 (RLRK) match the RLRK motif. Composition is skewed to polar residues over residues 63–78 (TQIN…SSKG) and 87–96 (ANTRGASTPP). S149 is subject to Phosphoserine. The segment covering 166–192 (PPRPNVPAPPPPTPPPPPPPLPPPLPS) has biased composition (pro residues). The residue at position 202 (S202) is a Phosphoserine. Composition is skewed to pro residues over residues 215 to 239 (VAPP…PLPP) and 256 to 271 (HLPP…PPCG). Residues 277–288 (AEPASPAQDAQE) show a composition bias toward low complexity. Residues 289-298 (PPAPPPPLPP) show a composition bias toward pro residues. Low complexity-rich tracts occupy residues 299 to 308 (YASCSPRASL) and 331 to 345 (PSFQ…AQAL). S383 bears the Phosphoserine mark. Over residues 393-404 (QQATAWTPTQQP) the composition is skewed to low complexity. Positions 424 to 448 (TFHSVEDFPPPDEYKPCQKIYPSKI) match the WASP-binding motif motif. Residues 461–483 (EAVGQSSDDIKGRNSQLSLKTLR) form a disordered region. Polar residues predominate over residues 473–483 (RNSQLSLKTLR).

Belongs to the verprolin family. In terms of assembly, interacts with WASL, and monomeric and filamentous actin.

The protein localises to the cytoplasm. In terms of biological role, may be a regulator of cytoskeletal organization. May have a role in spermatogenesis. This is WAS/WASL-interacting protein family member 3 (WIPF3) from Homo sapiens (Human).